Reading from the N-terminus, the 130-residue chain is Histone H2B (130 aa).

The tract at residues 1-31 (MAKSARHVTGKAPSSLDAHDRKKSKKKSSSM) is disordered. Lysine 122 participates in a covalent cross-link: Glycyl lysine isopeptide (Lys-Gly) (interchain with G-Cter in ubiquitin).

This sequence belongs to the histone H2B family. In terms of assembly, the nucleosome is a histone octamer containing two molecules each of H2A, H2B, H3 and H4 assembled in one H3-H4 heterotetramer and two H2A-H2B heterodimers. The octamer wraps approximately 147 bp of DNA. In terms of processing, monoubiquitinated to form H2BK123ub1. H2BK123ub1 gives a specific tag for epigenetic transcriptional activation and is also prerequisite for H3K4me and H3K79me formation.

It localises to the nucleus. The protein localises to the chromosome. Functionally, core component of nucleosome. Nucleosomes wrap and compact DNA into chromatin, limiting DNA accessibility to the cellular machineries which require DNA as a template. Histones thereby play a central role in transcription regulation, DNA repair, DNA replication and chromosomal stability. DNA accessibility is regulated via a complex set of post-translational modifications of histones, also called histone code, and nucleosome remodeling. This Encephalitozoon cuniculi (strain GB-M1) (Microsporidian parasite) protein is Histone H2B (HTB1).